A 264-amino-acid chain; its full sequence is Undecaprenyl-diphosphatase (264 aa).

8 helical membrane passes run 7–27 (VVILGFIQGIAEFLPISSSGH), 39–59 (LPIVFDIYLHLATVLVVMIYY), 89–109 (ILLILIITIITAFIGIFIEMF), 112–132 (LFTLNLVLINFIVTSILLFLL), 145–165 (ILLAGCLIGTMQGIGAMPGIS), 182–202 (SESFEISFLSLIPIVFGSLLL), 212–232 (MLFSIFEINLGAIIAFLVGLF), and 244–264 (SKLYYFSVYLIILVSLVYFLF).

It belongs to the UppP family.

The protein localises to the cell inner membrane. It carries out the reaction di-trans,octa-cis-undecaprenyl diphosphate + H2O = di-trans,octa-cis-undecaprenyl phosphate + phosphate + H(+). In terms of biological role, catalyzes the dephosphorylation of undecaprenyl diphosphate (UPP). Confers resistance to bacitracin. The sequence is that of Undecaprenyl-diphosphatase from Borrelia hermsii (strain HS1 / DAH).